Reading from the N-terminus, the 473-residue chain is Bifunctional protein HldE (473 aa).

The interval 1–318 is ribokinase; the sequence is MKLTLPRYDQ…RAVQREEGSE (318 aa). 194–197 contributes to the ATP binding site; that stretch reads NLHE. The active site involves aspartate 263. The interval 343–473 is cytidylyltransferase; the sequence is FTNGCFDILH…TAIVEKIRNK (131 aa).

This sequence in the N-terminal section; belongs to the carbohydrate kinase PfkB family. The protein in the C-terminal section; belongs to the cytidylyltransferase family. As to quaternary structure, homodimer.

It catalyses the reaction D-glycero-beta-D-manno-heptose 7-phosphate + ATP = D-glycero-beta-D-manno-heptose 1,7-bisphosphate + ADP + H(+). The catalysed reaction is D-glycero-beta-D-manno-heptose 1-phosphate + ATP + H(+) = ADP-D-glycero-beta-D-manno-heptose + diphosphate. The protein operates within nucleotide-sugar biosynthesis; ADP-L-glycero-beta-D-manno-heptose biosynthesis; ADP-L-glycero-beta-D-manno-heptose from D-glycero-beta-D-manno-heptose 7-phosphate: step 1/4. It participates in nucleotide-sugar biosynthesis; ADP-L-glycero-beta-D-manno-heptose biosynthesis; ADP-L-glycero-beta-D-manno-heptose from D-glycero-beta-D-manno-heptose 7-phosphate: step 3/4. Its function is as follows. Catalyzes the phosphorylation of D-glycero-D-manno-heptose 7-phosphate at the C-1 position to selectively form D-glycero-beta-D-manno-heptose-1,7-bisphosphate. In terms of biological role, catalyzes the ADP transfer from ATP to D-glycero-beta-D-manno-heptose 1-phosphate, yielding ADP-D-glycero-beta-D-manno-heptose. The chain is Bifunctional protein HldE from Ectopseudomonas mendocina (strain ymp) (Pseudomonas mendocina).